The following is a 390-amino-acid chain: Bifunctional enzyme IspD/IspF (390 aa).

Residues 1–229 form a 2-C-methyl-D-erythritol 4-phosphate cytidylyltransferase region; that stretch reads MAAGRGERAG…RQDHAVFPDI (229 aa). Residues 230–390 form a 2-C-methyl-D-erythritol 2,4-cyclodiphosphate synthase region; that stretch reads RTGNGYDVHS…TVIYPGEVPE (161 aa). Positions 236 and 238 each coordinate a divalent metal cation. 4-CDP-2-C-methyl-D-erythritol 2-phosphate is bound by residues 236-238 and 262-263; these read DVH and HS. His270 is an a divalent metal cation binding site. Residues 284 to 286, 360 to 363, Phe367, and Arg370 contribute to the 4-CDP-2-C-methyl-D-erythritol 2-phosphate site; these read DIG and TTNE.

This sequence in the N-terminal section; belongs to the IspD/TarI cytidylyltransferase family. IspD subfamily. It in the C-terminal section; belongs to the IspF family. It depends on a divalent metal cation as a cofactor.

The catalysed reaction is 2-C-methyl-D-erythritol 4-phosphate + CTP + H(+) = 4-CDP-2-C-methyl-D-erythritol + diphosphate. The enzyme catalyses 4-CDP-2-C-methyl-D-erythritol 2-phosphate = 2-C-methyl-D-erythritol 2,4-cyclic diphosphate + CMP. The protein operates within isoprenoid biosynthesis; isopentenyl diphosphate biosynthesis via DXP pathway; isopentenyl diphosphate from 1-deoxy-D-xylulose 5-phosphate: step 2/6. Its pathway is isoprenoid biosynthesis; isopentenyl diphosphate biosynthesis via DXP pathway; isopentenyl diphosphate from 1-deoxy-D-xylulose 5-phosphate: step 4/6. Its function is as follows. Bifunctional enzyme that catalyzes the formation of 4-diphosphocytidyl-2-C-methyl-D-erythritol from CTP and 2-C-methyl-D-erythritol 4-phosphate (MEP) (IspD), and catalyzes the conversion of 4-diphosphocytidyl-2-C-methyl-D-erythritol 2-phosphate (CDP-ME2P) to 2-C-methyl-D-erythritol 2,4-cyclodiphosphate (ME-CPP) with a corresponding release of cytidine 5-monophosphate (CMP) (IspF). The protein is Bifunctional enzyme IspD/IspF of Brucella abortus biovar 1 (strain 9-941).